A 274-amino-acid polypeptide reads, in one-letter code: NH(3)-dependent NAD(+) synthetase (274 aa).

46–53 (GISGGQDS) serves as a coordination point for ATP. Asp52 serves as a coordination point for Mg(2+). Residue Arg140 participates in deamido-NAD(+) binding. An ATP-binding site is contributed by Thr160. A Mg(2+)-binding site is contributed by Glu165. Residues Lys173 and Asp180 each coordinate deamido-NAD(+). The ATP site is built by Lys189 and Thr211. 260–261 (HK) is a binding site for deamido-NAD(+).

It belongs to the NAD synthetase family. Homodimer.

The catalysed reaction is deamido-NAD(+) + NH4(+) + ATP = AMP + diphosphate + NAD(+) + H(+). It functions in the pathway cofactor biosynthesis; NAD(+) biosynthesis; NAD(+) from deamido-NAD(+) (ammonia route): step 1/1. Catalyzes the ATP-dependent amidation of deamido-NAD to form NAD. Uses ammonia as a nitrogen source. The sequence is that of NH(3)-dependent NAD(+) synthetase from Streptococcus pneumoniae (strain Hungary19A-6).